A 212-amino-acid polypeptide reads, in one-letter code: uncharacterized protein (212 aa).

S-adenosyl-L-methionine contacts are provided by Gly-53 and Glu-74.

It belongs to the methyltransferase superfamily. YrrT family.

Its function is as follows. Could be a S-adenosyl-L-methionine-dependent methyltransferase. This is an uncharacterized protein from Exiguobacterium sibiricum (strain DSM 17290 / CCUG 55495 / CIP 109462 / JCM 13490 / 255-15).